Consider the following 453-residue polypeptide: Phosphoglucosamine mutase (453 aa).

The Phosphoserine intermediate role is filled by S102. Mg(2+) is bound by residues S102, D244, D246, and D248. S102 is subject to Phosphoserine.

This sequence belongs to the phosphohexose mutase family. Mg(2+) is required as a cofactor. Activated by phosphorylation.

It carries out the reaction alpha-D-glucosamine 1-phosphate = D-glucosamine 6-phosphate. In terms of biological role, catalyzes the conversion of glucosamine-6-phosphate to glucosamine-1-phosphate. The polypeptide is Phosphoglucosamine mutase (Pelobacter propionicus (strain DSM 2379 / NBRC 103807 / OttBd1)).